Consider the following 656-residue polypeptide: Translation factor GUF1 homolog, mitochondrial (656 aa).

The N-terminal 29 residues, 1–29 (MLAVRRRGLRVLAVAPLRVRGLATTSTEF), are a transit peptide targeting the mitochondrion. The 185-residue stretch at 54-238 (ERIRNFSIVA…AVVERLPPPV (185 aa)) folds into the tr-type G domain. Residues 63 to 70 (AHIDHGKS), 131 to 135 (DTPGH), and 185 to 188 (TKID) contribute to the GTP site.

The protein belongs to the TRAFAC class translation factor GTPase superfamily. Classic translation factor GTPase family. LepA subfamily.

It is found in the mitochondrion inner membrane. It carries out the reaction GTP + H2O = GDP + phosphate + H(+). Functionally, promotes mitochondrial protein synthesis. May act as a fidelity factor of the translation reaction, by catalyzing a one-codon backward translocation of tRNAs on improperly translocated ribosomes. Binds to mitochondrial ribosomes in a GTP-dependent manner. The sequence is that of Translation factor GUF1 homolog, mitochondrial from Phytophthora infestans (strain T30-4) (Potato late blight agent).